The primary structure comprises 174 residues: Non-classical export protein 2 homolog 1 (174 aa).

The Cytoplasmic segment spans residues 1–7 (MLSAADN). The chain crosses the membrane as a helical span at residues 8 to 28 (LVRIINAVFLIISIGLISGLI). Over 29–41 (GTQTKHSSRVNFC) the chain is Extracellular. A helical membrane pass occupies residues 42–62 (MFAAVYGLVTDSLYGFLANFW). At 63 to 69 (TSLTYPA) the chain is on the cytoplasmic side. The chain crosses the membrane as a helical span at residues 70-90 (ILLVLDFLNFIFTFVAATALA). At 91–122 (VGIRCHSCKNKTYLEQNKIIQGSSSRCHQSQA) the chain is on the extracellular side. A helical transmembrane segment spans residues 123 to 143 (AVAFFYFSCFLFLIKVTVATM). Residues 144 to 174 (GMMQNGGFGSNTGFSRRRARRQMGIPTISQV) are Cytoplasmic-facing.

It belongs to the NCE102 family.

The protein localises to the cell membrane. In terms of biological role, involved in membrane organization. Required for the formation of membrane compartments of CAN1 (MCCs), localization of CAN1 at the MCCs and subsequent invagination of the plasma membrane at the MCCs sites. Involved in eisosome organization and might act as a sensor of sphingolipids that regulates plasma membrane function. Involved in a novel pathway of export of proteins that lack a cleavable signal sequence. Non-classical export pathway also functions as an alternative clearance/detoxification pathway to eliminate damaged material, when the basic repair pathway is not sufficient. The protein is Non-classical export protein 2 homolog 1 (FHN1) of Saccharomyces cerevisiae (strain ATCC 204508 / S288c) (Baker's yeast).